A 655-amino-acid chain; its full sequence is Sphingomyelin phosphodiesterase 3 (655 aa).

The Cytoplasmic segment spans residues 1–10 (MVLYTTPFPN). The segment at residues 11-31 (SCLSALHAVSWALIFPCYWLV) is an intramembrane region (helical). At 32-64 (DRLVASFIPTTYEKRQRADDPCYLQLFCTVLFT) the chain is on the cytoplasmic side. Residues Cys-53 and Cys-59 are each lipidated (S-palmitoyl cysteine). The helical intramembrane region spans 65-85 (PVYLALLVAALPFAFLGFIFW). Residues 86–655 (SPLQSARRPY…LMVSAGEEEA (570 aa)) are Cytoplasmic-facing. Ser-178 carries the phosphoserine modification. Disordered stretches follow at residues 209–237 (VEYK…DGSL) and 250–320 (GGRA…SNSK). A compositionally biased stretch (basic and acidic residues) spans 211–221 (YKGDGGRHPSD). The residue at position 289 (Ser-289) is a Phosphoserine. Glu-362 provides a ligand contact to Mg(2+). 2 S-palmitoyl cysteine lipidation sites follow: Cys-395 and Cys-396. His-639 functions as the Proton acceptor in the catalytic mechanism.

It belongs to the neutral sphingomyelinase family. Requires Mg(2+) as cofactor. In terms of processing, palmitoylated, palmitoylation-deficient proteins are targeted for lysosomal degradation. In brain sections, it is restricted to neurons and especially prominent in large cells, including Purkinje cells, pyramidal cells, neurons of the dentate gyrus granular layer, and neurons in the pontine nuclei. Also present in the hypothalamic nuclei, neurons in the piriform cortex, and nuclei of the brainstem (at protein level). Mainly expressed in brain and jejunum. Weakly or not expressed in heart, spleen, lung, liver, kidney and testis.

The protein localises to the golgi apparatus membrane. It is found in the cell membrane. It catalyses the reaction a sphingomyelin + H2O = phosphocholine + an N-acylsphing-4-enine + H(+). The enzyme catalyses N-(15Z-tetracosenoyl)sphing-4-enine-1-phosphocholine + H2O = N-(15Z-tetracosenoyl)-sphing-4-enine + phosphocholine + H(+). The catalysed reaction is N-(tetracosanoyl)-sphing-4-enine-1-phosphocholine + H2O = N-tetracosanoyl-sphing-4-enine + phosphocholine + H(+). It carries out the reaction an N-(acyl)-sphingosylphosphocholine + H2O = an N-acyl-sphingoid base + phosphocholine + H(+). It catalyses the reaction 1-hexadecanoyl-sn-glycero-3-phosphocholine + H2O = 1-hexadecanoyl-sn-glycerol + phosphocholine + H(+). The enzyme catalyses 1-O-octadecyl-sn-glycero-3-phosphocholine + H2O = 1-O-octadecyl-sn-glycerol + phosphocholine + H(+). The catalysed reaction is a sphingosylphosphocholine + H2O = a sphingoid base + phosphocholine + H(+). It carries out the reaction N-(hexadecanoyl)-sphing-4-enine-1-phosphocholine + H2O = N-hexadecanoylsphing-4-enine + phosphocholine + H(+). It participates in lipid metabolism; sphingolipid metabolism. With respect to regulation, inhibited by nSMase inhibitor GW4869. Binding of anionic phospholipids (APLs) such as phosphatidylserine (PS) and phosphatidic acid (PA) increases enzymatic activity. Catalyzes the hydrolysis of sphingomyelin to form ceramide and phosphocholine. Ceramide mediates numerous cellular functions, such as apoptosis and growth arrest, and is capable of regulating these 2 cellular events independently. Also hydrolyzes sphingosylphosphocholine. Binds to anionic phospholipids (APLs) such as phosphatidylserine (PS) and phosphatidic acid (PA) that modulate enzymatic activity and subcellular location. Regulates the cell cycle by acting as a growth suppressor in confluent cells. Acts as a regulator of postnatal development and participates in bone and dentin mineralization. May be involved in IL-1-beta-induced JNK activation in hepatocytes. May act as a mediator in transcriptional regulation of NOS2/iNOS via the NF-kappa-B activation under inflammatory conditions. In Rattus norvegicus (Rat), this protein is Sphingomyelin phosphodiesterase 3.